Here is a 475-residue protein sequence, read N- to C-terminus: 3-isopropylmalate dehydratase large subunit (475 aa).

Residues cysteine 347, cysteine 407, and cysteine 410 each contribute to the [4Fe-4S] cluster site. A disordered region spans residues 418–442 (LAPGERSASTSNRNFEGRQGKGGRT).

It belongs to the aconitase/IPM isomerase family. LeuC type 1 subfamily. As to quaternary structure, heterodimer of LeuC and LeuD. [4Fe-4S] cluster is required as a cofactor.

It catalyses the reaction (2R,3S)-3-isopropylmalate = (2S)-2-isopropylmalate. It participates in amino-acid biosynthesis; L-leucine biosynthesis; L-leucine from 3-methyl-2-oxobutanoate: step 2/4. Functionally, catalyzes the isomerization between 2-isopropylmalate and 3-isopropylmalate, via the formation of 2-isopropylmaleate. The protein is 3-isopropylmalate dehydratase large subunit of Streptomyces griseus subsp. griseus (strain JCM 4626 / CBS 651.72 / NBRC 13350 / KCC S-0626 / ISP 5235).